Here is a 758-residue protein sequence, read N- to C-terminus: Spastin (758 aa).

The segment at M1–Y103 is disordered. The Cytoplasmic segment spans residues M1–P121. The tract at residues M1–A210 is required for localization to punctate cytoplasmic foci. Low complexity-rich tracts occupy residues S8–A28, R43–S58, S66–P76, and T85–P95. An intramembrane region (helical) is located at residues I122–Y142. Residues L143–I758 are Cytoplasmic-facing. Polar residues-rich tracts occupy residues S169–S180 and Q189–Q198. The tract at residues S169–P202 is disordered. Residues M208–I758 are sufficient for interaction with microtubules and microtubule severing. The 76-residue stretch at H233–L308 folds into the MIT domain. The span at K323–E339 shows a compositional bias: basic and acidic residues. Positions K323–P454 are disordered. Polar residues-rich tracts occupy residues N390–G406 and Q425–P454. The interval N443–V455 is required for interaction with microtubules. G523–T530 is a binding site for ATP.

It belongs to the AAA ATPase family. Spastin subfamily. As to quaternary structure, homohexamer. The homohexamer is stabilized by ATP-binding. The homohexamer may adopt a ring conformation through which microtubules pass prior to being severed. Interacts with microtubules. Interacts with atl; may be involved in microtubule dynamics.

Its subcellular location is the membrane. It localises to the cytoplasm. The protein localises to the cytoskeleton. The protein resides in the microtubule organizing center. It is found in the centrosome. Its subcellular location is the chromosome. It localises to the lipid droplet. The enzyme catalyses n ATP + n H2O + a microtubule = n ADP + n phosphate + (n+1) alpha/beta tubulin heterodimers.. In terms of biological role, ATP-dependent microtubule severing protein. Stimulates microtubule minus-end depolymerization and poleward microtubule flux in the mitotic spindle. Regulates microtubule stability in the neuromuscular junction synapse. Involved in lipid metabolism by regulating the size and distribution of lipid droplets. Involved in axon regeneration by regulating microtubule severing. The protein is Spastin of Drosophila simulans (Fruit fly).